The sequence spans 163 residues: Nucleotide-binding protein ECA1137 (163 aa).

Belongs to the YajQ family.

Its function is as follows. Nucleotide-binding protein. The sequence is that of Nucleotide-binding protein ECA1137 from Pectobacterium atrosepticum (strain SCRI 1043 / ATCC BAA-672) (Erwinia carotovora subsp. atroseptica).